The sequence spans 813 residues: Striatin-interacting protein 1 homolog (813 aa).

2 disordered regions span residues 1 to 41 (MDGV…SEAP) and 307 to 379 (RAAS…RDEV). Polar residues predominate over residues 9–18 (NNKQKQNQML). Residues 22–35 (MRGEFTRNQRKDSE) are compositionally biased toward basic and acidic residues. The span at 307–316 (RAASPPASAS) shows a compositional bias: low complexity. A Phosphoserine modification is found at serine 310. Residues 331–352 (KALIKQDNLDTFNEKDPYKADD) show a composition bias toward basic and acidic residues. Positions 353-367 (SHEDEEENDDNDNSL) are enriched in acidic residues.

The protein belongs to the STRIP family. As to quaternary structure, part of the core of STRIPAK complexes composed of PP2A catalytic and scaffolding subunits, the striatins (PP2A regulatory subunits), the striatin-associated proteins MOB4, STRIP1 and STRIP2, PDCD10 and members of the STE20 kinases, such as STK24 and STK26.

It localises to the cytoplasm. Functionally, plays a role in the regulation of cell morphology and cytoskeletal organization. Required in the cortical actin filament dynamics and cell shape. Part of the striatin-interacting phosphatase and kinase (STRIPAK) complexes. STRIPAK complexes have critical roles in protein (de)phosphorylation and are regulators of multiple signaling pathways including Hippo, MAPK, nuclear receptor and cytoskeleton remodeling. Different types of STRIPAK complexes are involved in a variety of biological processes such as cell growth, differentiation, apoptosis, metabolism and immune regulation. The protein is Striatin-interacting protein 1 homolog (strip1) of Danio rerio (Zebrafish).